The chain runs to 106 residues: ATP-dependent Clp protease adapter protein ClpS (106 aa).

This sequence belongs to the ClpS family. In terms of assembly, binds to the N-terminal domain of the chaperone ClpA.

Involved in the modulation of the specificity of the ClpAP-mediated ATP-dependent protein degradation. The protein is ATP-dependent Clp protease adapter protein ClpS of Erwinia tasmaniensis (strain DSM 17950 / CFBP 7177 / CIP 109463 / NCPPB 4357 / Et1/99).